The sequence spans 529 residues: Lanosterol 14-alpha demethylase (529 aa).

C468 provides a ligand contact to heme.

Belongs to the cytochrome P450 family. The cofactor is heme.

It localises to the membrane. The catalysed reaction is a 14alpha-methyl steroid + 3 reduced [NADPH--hemoprotein reductase] + 3 O2 = a Delta(14) steroid + formate + 3 oxidized [NADPH--hemoprotein reductase] + 4 H2O + 4 H(+). It catalyses the reaction a 14alpha-methyl steroid + reduced [NADPH--hemoprotein reductase] + O2 = a 14alpha-hydroxymethyl steroid + oxidized [NADPH--hemoprotein reductase] + H2O + H(+). The enzyme catalyses a 14alpha-hydroxymethyl steroid + reduced [NADPH--hemoprotein reductase] + O2 = a 14alpha-formyl steroid + oxidized [NADPH--hemoprotein reductase] + 2 H2O + H(+). It carries out the reaction a 14alpha-formyl steroid + reduced [NADPH--hemoprotein reductase] + O2 = a Delta(14) steroid + formate + oxidized [NADPH--hemoprotein reductase] + H2O + 2 H(+). The catalysed reaction is lanosterol + 3 reduced [NADPH--hemoprotein reductase] + 3 O2 = 4,4-dimethyl-5alpha-cholesta-8,14,24-trien-3beta-ol + formate + 3 oxidized [NADPH--hemoprotein reductase] + 4 H2O + 4 H(+). It catalyses the reaction lanosterol + reduced [NADPH--hemoprotein reductase] + O2 = 32-hydroxylanosterol + oxidized [NADPH--hemoprotein reductase] + H2O + H(+). The enzyme catalyses 32-hydroxylanosterol + reduced [NADPH--hemoprotein reductase] + O2 = 32-oxolanosterol + oxidized [NADPH--hemoprotein reductase] + 2 H2O + H(+). It carries out the reaction 32-oxolanosterol + reduced [NADPH--hemoprotein reductase] + O2 = 4,4-dimethyl-5alpha-cholesta-8,14,24-trien-3beta-ol + formate + oxidized [NADPH--hemoprotein reductase] + H2O + 2 H(+). The catalysed reaction is eburicol + 3 reduced [NADPH--hemoprotein reductase] + 3 O2 = 14-demethyleburicol + formate + 3 oxidized [NADPH--hemoprotein reductase] + 4 H2O + 4 H(+). It catalyses the reaction eburicol + reduced [NADPH--hemoprotein reductase] + O2 = 32-hydroxyeburicol + oxidized [NADPH--hemoprotein reductase] + H2O + H(+). The enzyme catalyses 32-hydroxyeburicol + reduced [NADPH--hemoprotein reductase] + O2 = 32-oxoeburicol + oxidized [NADPH--hemoprotein reductase] + 2 H2O + H(+). It carries out the reaction 32-oxoeburicol + reduced [NADPH--hemoprotein reductase] + O2 = 14-demethyleburicol + formate + oxidized [NADPH--hemoprotein reductase] + H2O + 2 H(+). It participates in steroid biosynthesis; zymosterol biosynthesis; zymosterol from lanosterol: step 1/6. Its function is as follows. Sterol 14alpha-demethylase that plays a critical role in the third module of ergosterol biosynthesis pathway, being ergosterol the major sterol component in fungal membranes that participates in a variety of functions. The third module or late pathway involves the ergosterol synthesis itself through consecutive reactions that mainly occur in the endoplasmic reticulum (ER) membrane. In filamentous fungi, during the initial step of this module, lanosterol (lanosta-8,24-dien-3beta-ol) can be metabolized to eburicol. Sterol 14alpha-demethylase catalyzes the three-step oxidative removal of the 14alpha-methyl group (C-32) of both these sterols in the form of formate, and converts eburicol and lanosterol to 14-demethyleburicol (4,4,24-trimethylergosta-8,14,24(28)-trienol) and 4,4-dimethyl-5alpha-cholesta-8,14,24-trien-3beta-ol, respectively, which are further metabolized by other enzymes in the pathway to ergosterol. Can also use substrates not intrinsic to fungi, such as 24,25-dihydrolanosterol (DHL), producing 4,4-dimethyl-8,14-cholestadien-3-beta-ol, but at lower rates than the endogenous substrates. This is Lanosterol 14-alpha demethylase (ERG11) from Eremothecium gossypii (strain ATCC 10895 / CBS 109.51 / FGSC 9923 / NRRL Y-1056) (Yeast).